Reading from the N-terminus, the 24-residue chain is Coenzyme PQQ synthesis protein A (24 aa).

A cross-link (pyrroloquinoline quinone (Glu-Tyr)) is located at residues glutamate 16–tyrosine 20.

This sequence belongs to the PqqA family.

It participates in cofactor biosynthesis; pyrroloquinoline quinone biosynthesis. Required for coenzyme pyrroloquinoline quinone (PQQ) biosynthesis. PQQ is probably formed by cross-linking a specific glutamate to a specific tyrosine residue and excising these residues from the peptide. The chain is Coenzyme PQQ synthesis protein A from Variovorax paradoxus (strain S110).